A 147-amino-acid chain; its full sequence is Large ribosomal subunit protein uL15 (147 aa).

Belongs to the universal ribosomal protein uL15 family. In terms of assembly, part of the 50S ribosomal subunit.

Binds to the 23S rRNA. In Blochmanniella floridana, this protein is Large ribosomal subunit protein uL15.